The sequence spans 407 residues: Elongation factor Tu, chloroplastic (407 aa).

The tr-type G domain occupies 10–212 (KPHVNIGTIG…SVDNYIPAPE (203 aa)). The G1 stretch occupies residues 19–26 (GHVDHGKT). GTP is bound at residue 19–26 (GHVDHGKT). Threonine 26 lines the Mg(2+) pocket. Residues 59-63 (GITIN) form a G2 region. Residues 80-83 (DCPG) are G3. GTP is bound by residues 80 to 84 (DCPGH) and 135 to 138 (NKAD). The segment at 135–138 (NKAD) is G4. Positions 173 to 175 (SAL) are G5.

The protein belongs to the TRAFAC class translation factor GTPase superfamily. Classic translation factor GTPase family. EF-Tu/EF-1A subfamily.

It is found in the plastid. It localises to the chloroplast. It carries out the reaction GTP + H2O = GDP + phosphate + H(+). Its function is as follows. GTP hydrolase that promotes the GTP-dependent binding of aminoacyl-tRNA to the A-site of ribosomes during protein biosynthesis. The polypeptide is Elongation factor Tu, chloroplastic (tufA) (Emiliania huxleyi (Coccolithophore)).